Reading from the N-terminus, the 555-residue chain is Solute carrier family 22 member 2 (555 aa).

Residues 1 to 21 are Cytoplasmic-facing; that stretch reads MPTTVDDVLEHGGEFHFFQKQ. Residues 22 to 42 traverse the membrane as a helical segment; the sequence is MFFLLALLSATFTPIYVGIVF. The Extracellular segment spans residues 43–150; sequence LGFTPDHRCR…LVCANSWMLD (108 aa). Asparagine 72 is a glycosylation site (N-linked (GlcNAc...) asparagine). A helical transmembrane segment spans residues 151–171; that stretch reads LFQASVNVGFFFGSVSIGYIA. At 172–177 the chain is on the cytoplasmic side; it reads DRFGRK. The chain crosses the membrane as a helical span at residues 178-198; the sequence is LCLLTTVLINAAAGVLMAISP. Residues 199-210 are Extracellular-facing; sequence TYTWMLIFRLIQ. A helical transmembrane segment spans residues 211 to 231; sequence GLVSKAGWLIGYILITEFVGR. At 232 to 238 the chain is on the cytoplasmic side; sequence RYRRTVG. A helical membrane pass occupies residues 239–259; that stretch reads IFYQVAYTVGLLVLAGVAYAL. At 260–263 the chain is on the extracellular side; it reads PHWR. The chain crosses the membrane as a helical span at residues 264–284; the sequence is WLQFTVTLPNFFFLLYYWCIP. A Proline-rich sequence motif is present at residues 284-288; it reads PESPR. The Cytoplasmic portion of the chain corresponds to 285-348; that stretch reads ESPRWLISQN…VRTPQIRKHT (64 aa). Residues 349 to 369 form a helical membrane-spanning segment; sequence MILMYNWFTSSVLYQGLIMHM. At 370-375 the chain is on the extracellular side; that stretch reads GLAGDN. Residues 376–396 traverse the membrane as a helical segment; that stretch reads IYLDFFYSALVEFPAAFMIIV. The Cytoplasmic segment spans residues 397–404; that stretch reads TIDRIGRR. Residues 405–425 traverse the membrane as a helical segment; that stretch reads YPWAASNMVAGAACLASVFIP. Residues 426–432 lie on the Extracellular side of the membrane; sequence GDLQWLK. The chain crosses the membrane as a helical span at residues 433–453; sequence IIISCLGRMGITMAYEIVRLV. Residues 454–464 lie on the Cytoplasmic side of the membrane; the sequence is NAELYPTFIRN. The helical transmembrane segment at 465-485 threads the bilayer; sequence LGVHICSSMCDIGGIITPFLV. Topologically, residues 486 to 494 are extracellular; the sequence is YRLTNIWLE. A helical transmembrane segment spans residues 495–515; the sequence is LPLMVFGVLGLVAGGLVLLLP. Topologically, residues 516–555 are cytoplasmic; the sequence is ETKGKALPETIEEAENMQRPRKNKEKMIYLQVQKLDIPLN.

This sequence belongs to the major facilitator (TC 2.A.1) superfamily. Organic cation transporter (TC 2.A.1.19) family. In terms of processing, tyrosine phosphorylated.

It localises to the basolateral cell membrane. The protein resides in the basal cell membrane. Its subcellular location is the apical cell membrane. It catalyses the reaction (R)-noradrenaline(out) = (R)-noradrenaline(in). The catalysed reaction is (R)-adrenaline(out) = (R)-adrenaline(in). It carries out the reaction serotonin(out) = serotonin(in). The enzyme catalyses dopamine(out) = dopamine(in). It catalyses the reaction histamine(out) = histamine(in). The catalysed reaction is thiamine(in) = thiamine(out). It carries out the reaction creatinine(in) = creatinine(out). The enzyme catalyses 1-methylnicotinamide(out) = 1-methylnicotinamide(in). It catalyses the reaction guanidine(out) = guanidine(in). The catalysed reaction is choline(out) = choline(in). It carries out the reaction agmatine(out) = agmatine(in). The enzyme catalyses putrescine(out) = putrescine(in). It catalyses the reaction spermidine(in) = spermidine(out). The catalysed reaction is tyramine(in) = tyramine(out). It carries out the reaction L-histidyl-L-proline diketopiperazine(in) = L-histidyl-L-proline diketopiperazine(out). The enzyme catalyses (R)-salsolinol(in) = (R)-salsolinol(out). It catalyses the reaction N-methyl-(R)-salsolinol(in) = N-methyl-(R)-salsolinol(out). The catalysed reaction is acetylcholine(in) = acetylcholine(out). It carries out the reaction prostaglandin F2alpha(out) = prostaglandin F2alpha(in). The enzyme catalyses prostaglandin E2(out) = prostaglandin E2(in). With respect to regulation, tyrosine phosphorylation of the transporter leads to activation of the transport activity. Inhibited by cGMP, most likely through a cGMP-binding protein that interacts with OCT2. In terms of biological role, electrogenic voltage-dependent transporter that mediates the transport of a variety of organic cations such as endogenous bioactive amines, cationic drugs and xenobiotics. Functions as a Na(+)-independent, bidirectional uniporter. Cation cellular uptake or release is driven by the electrochemical potential, i.e. membrane potential and concentration gradient. However, may also engage electroneutral cation exchange when saturating concentrations of cation substrates are reached. Predominantly expressed at the basolateral membrane of hepatocytes and proximal tubules and involved in the uptake and disposition of cationic compounds by hepatic and renal clearance from the blood flow. Implicated in monoamine neurotransmitters uptake such as histamine, dopamine, adrenaline/epinephrine, noradrenaline/norepinephrine, serotonin and tyramine, thereby supporting a physiological role in the central nervous system by regulating interstitial concentrations of neurotransmitters. Also capable of transporting dopaminergic neuromodulators cyclo(his-pro), salsolinol and N-methyl-salsolinol, thereby involved in the maintenance of dopaminergic cell integrity in the central nervous system. Mediates the bidirectional transport of acetylcholine (ACh) at the apical membrane of ciliated cell in airway epithelium, thereby playing a role in luminal release of ACh from bronchial epithelium. Also transports guanidine and endogenous monoamines such as vitamin B1/thiamine, creatinine and N-1-methylnicotinamide (NMN). Mediates the uptake and efflux of quaternary ammonium compound choline. Mediates the bidirectional transport of polyamine agmatine and the uptake of polyamines putrescine and spermidine. Able to transport non-amine endogenous compounds such as prostaglandin E2 (PGE2) and prostaglandin F2-alpha (PGF2-alpha). Also involved in the uptake of xenobiotic 4-(4-(dimethylamino)styryl)-N-methylpyridinium (ASP). May contribute to regulate the transport of organic compounds in testis across the blood-testis-barrier. This is Solute carrier family 22 member 2 (SLC22A2) from Pongo abelii (Sumatran orangutan).